A 446-amino-acid chain; its full sequence is Tubulin beta chain (446 aa).

Residues Q11, E69, S138, G142, T143, G144, N204, and N226 each coordinate GTP. E69 is a Mg(2+) binding site. The interval 426–446 is disordered; that stretch reads QDATAEEEGEYVEDEDEMDGM. The span at 429 to 446 shows a compositional bias: acidic residues; the sequence is TAEEEGEYVEDEDEMDGM.

Belongs to the tubulin family. As to quaternary structure, dimer of alpha and beta chains. A typical microtubule is a hollow water-filled tube with an outer diameter of 25 nm and an inner diameter of 15 nM. Alpha-beta heterodimers associate head-to-tail to form protofilaments running lengthwise along the microtubule wall with the beta-tubulin subunit facing the microtubule plus end conferring a structural polarity. Microtubules usually have 13 protofilaments but different protofilament numbers can be found in some organisms and specialized cells. The cofactor is Mg(2+).

The protein resides in the cytoplasm. The protein localises to the cytoskeleton. Its function is as follows. Tubulin is the major constituent of microtubules, a cylinder consisting of laterally associated linear protofilaments composed of alpha- and beta-tubulin heterodimers. Microtubules grow by the addition of GTP-tubulin dimers to the microtubule end, where a stabilizing cap forms. Below the cap, tubulin dimers are in GDP-bound state, owing to GTPase activity of alpha-tubulin. The protein is Tubulin beta chain of Euplotes crassus.